A 295-amino-acid chain; its full sequence is Biliverdin reductase A (295 aa).

Positions M1–S2 are excised as a propeptide. Residues R18–A19, S76–H79, and Y97 contribute to the NAD(+) site. A Phosphoserine modification is found at S154. S167 serves as a coordination point for NAD(+). At T173 the chain carries Phosphothreonine. Phosphoserine occurs at positions 177 and 229. K247 and K252 each carry N6-acetyllysine. Residues H279, C280, C291, and H292 each contribute to the Zn(2+) site.

This sequence belongs to the Gfo/Idh/MocA family. Biliverdin reductase subfamily. In terms of assembly, monomer. Zn(2+) serves as cofactor.

It localises to the cytoplasm. The protein resides in the cytosol. It carries out the reaction (4Z,15Z)-bilirubin IXalpha + NAD(+) = biliverdin IXalpha + NADH + H(+). The catalysed reaction is (4Z,15Z)-bilirubin IXalpha + NADP(+) = biliverdin IXalpha + NADPH + H(+). The protein operates within porphyrin-containing compound metabolism; protoheme degradation. Its function is as follows. Reduces the gamma-methene bridge of the open tetrapyrrole, biliverdin IXalpha, to bilirubin with the concomitant oxidation of a NADH or NADPH cofactor. Does not reduce bilirubin IXbeta. Uses the reactants NADH or NADPH depending on the pH; NADH is used at the acidic pH range (6-6.9) and NADPH at the alkaline range (8.5-8.7). NADPH, however, is the probable reactant in biological systems. In Mus musculus (Mouse), this protein is Biliverdin reductase A.